Consider the following 416-residue polypeptide: Enterobactin exporter EntS (416 aa).

Over 1–21 the chain is Cytoplasmic; the sequence is MNKQSWLLNLSLLKTHPAFRA. Residues 22–42 form a helical membrane-spanning segment; sequence VFLARFISIVSLGLLGVAVPV. Topologically, residues 43–55 are periplasmic; the sequence is QIQMMTHSTWQVG. Residues 56–76 form a helical membrane-spanning segment; that stretch reads LSVTLTGGAMFVGLMVGGVLA. Over 77 to 83 the chain is Cytoplasmic; the sequence is DRYERKK. A helical membrane pass occupies residues 84 to 104; the sequence is VILLARGTCGIGFIGLCLNAL. Residues 105 to 109 lie on the Periplasmic side of the membrane; it reads LPEPS. The chain crosses the membrane as a helical span at residues 110–130; that stretch reads LLAIYLLGLWDGFFASLGVTA. The Cytoplasmic portion of the chain corresponds to 131–156; that stretch reads LLAATPALVGRENLMQAGAITMLTVR. The chain crosses the membrane as a helical span at residues 157 to 177; that stretch reads LGSVNSPMIGGLLLAIGGVAW. A topological domain (periplasmic) is located at residue asparagine 178. A helical transmembrane segment spans residues 179 to 199; the sequence is YGLAAAGTFITLLPLLSLPAL. Residues 200–218 are Cytoplasmic-facing; it reads PPPPQPREHPLKSLLAGFR. The helical transmembrane segment at 219–239 threads the bilayer; that stretch reads FLLASPLVGGIALLGGLLTMA. Residues 240–256 lie on the Periplasmic side of the membrane; that stretch reads SAVRVLYPALADNWQMS. Residues 257-277 form a helical membrane-spanning segment; it reads AAQIGFLYAAIPLGAAIGALT. Residues 278–287 lie on the Cytoplasmic side of the membrane; that stretch reads SGKLAHSARP. A helical membrane pass occupies residues 288-307; that stretch reads GLLMLLSTLGSFLAIGLFGL. Topologically, residues 308–313 are periplasmic; it reads MPMWIL. The helical transmembrane segment at 314 to 336 threads the bilayer; the sequence is GVVCLALFGWLSAVSSLLQYTML. Over 337–356 the chain is Cytoplasmic; that stretch reads QTQTPEVMLGRINGLWTAQN. A helical membrane pass occupies residues 357-377; it reads VTGDAIGAALLGGLGAMMTPV. Position 378 (alanine 378) is a topological domain, periplasmic. The chain crosses the membrane as a helical span at residues 379 to 399; the sequence is SASASGFGLLIIGVLLLLVLV. The Cytoplasmic portion of the chain corresponds to 400-416; sequence ELRHFRQTPPQVTASDS.

It belongs to the major facilitator superfamily. EntS (TC 2.A.1.38) family.

The protein resides in the cell inner membrane. Functionally, component of an export pathway for enterobactin. The protein is Enterobactin exporter EntS of Shigella dysenteriae serotype 1 (strain Sd197).